We begin with the raw amino-acid sequence, 470 residues long: Dynein axonemal assembly factor 11 (470 aa).

LRR repeat units lie at residues 20 to 43, 44 to 65, 66 to 89, and 90 to 110; these read IFSL…DKWC, RELK…VSKL, KKLE…GCES, and LQKL…NSLQ. The LRRCT domain occupies 128–146; it reads YEGYRQYVVATLPQLKWLD. Positions 177-288 form a coiled coil; the sequence is LRKRAAEREK…NRSEEELKKK (112 aa). Residues 182–265 are disordered; that stretch reads AEREKATNNL…SQYTPESRLE (84 aa). Over residues 194 to 213 the composition is skewed to basic and acidic residues; that stretch reads KQKEGRKAQEKKPGFDRRWY. Residues 303-395 form the CS domain; it reads VNESKLDFSL…TEMIQTKRAK (93 aa). A disordered region spans residues 447 to 470; sequence HRNSARDTADSEDFIDNAEVPPLV.

This sequence belongs to the tilB family.

Its subcellular location is the cytoplasm. It is found in the cell projection. The protein resides in the cilium. The protein localises to the dynein axonemal particle. It localises to the flagellum. Functionally, involved in dynein arm assembly, is important for expression and transporting outer dynein arm (ODA) proteins from the cytoplasm to the cilia. The protein is Dynein axonemal assembly factor 11 (dnaaf11) of Xenopus tropicalis (Western clawed frog).